The primary structure comprises 116 residues: Large ribosomal subunit protein bL17 (116 aa).

It belongs to the bacterial ribosomal protein bL17 family. As to quaternary structure, part of the 50S ribosomal subunit. Contacts protein L32.

This Synechocystis sp. (strain ATCC 27184 / PCC 6803 / Kazusa) protein is Large ribosomal subunit protein bL17.